We begin with the raw amino-acid sequence, 130 residues long: Small ribosomal subunit protein uS11c (130 aa).

Belongs to the universal ribosomal protein uS11 family. Part of the 30S ribosomal subunit.

It is found in the plastid. The protein resides in the chloroplast. The sequence is that of Small ribosomal subunit protein uS11c from Zygnema circumcarinatum (Green alga).